A 142-amino-acid chain; its full sequence is ATP synthase epsilon chain (142 aa).

It belongs to the ATPase epsilon chain family. In terms of assembly, F-type ATPases have 2 components, CF(1) - the catalytic core - and CF(0) - the membrane proton channel. CF(1) has five subunits: alpha(3), beta(3), gamma(1), delta(1), epsilon(1). CF(0) has three main subunits: a, b and c.

The protein resides in the cell inner membrane. Produces ATP from ADP in the presence of a proton gradient across the membrane. In Shewanella halifaxensis (strain HAW-EB4), this protein is ATP synthase epsilon chain.